Reading from the N-terminus, the 465-residue chain is Glutamate--tRNA ligase (465 aa).

The short motif at 10–20 (PSPTGQLHIGG) is the 'HIGH' region element. 4 residues coordinate Zn(2+): cysteine 99, cysteine 101, cysteine 126, and glutamate 128. The short motif at 236 to 240 (KLSKR) is the 'KMSKS' region element. Lysine 239 is an ATP binding site.

This sequence belongs to the class-I aminoacyl-tRNA synthetase family. Glutamate--tRNA ligase type 1 subfamily. In terms of assembly, monomer. The cofactor is Zn(2+).

It localises to the cytoplasm. The catalysed reaction is tRNA(Glu) + L-glutamate + ATP = L-glutamyl-tRNA(Glu) + AMP + diphosphate. Catalyzes the attachment of glutamate to tRNA(Glu) in a two-step reaction: glutamate is first activated by ATP to form Glu-AMP and then transferred to the acceptor end of tRNA(Glu). This chain is Glutamate--tRNA ligase, found in Lawsonia intracellularis (strain PHE/MN1-00).